A 185-amino-acid chain; its full sequence is Ribosome-recycling factor (185 aa).

Belongs to the RRF family.

The protein resides in the cytoplasm. Responsible for the release of ribosomes from messenger RNA at the termination of protein biosynthesis. May increase the efficiency of translation by recycling ribosomes from one round of translation to another. The protein is Ribosome-recycling factor of Campylobacter concisus (strain 13826).